We begin with the raw amino-acid sequence, 126 residues long: Holo-[acyl-carrier-protein] synthase (126 aa).

Positions 8 and 57 each coordinate Mg(2+).

This sequence belongs to the P-Pant transferase superfamily. AcpS family. Requires Mg(2+) as cofactor.

It is found in the cytoplasm. It carries out the reaction apo-[ACP] + CoA = holo-[ACP] + adenosine 3',5'-bisphosphate + H(+). Transfers the 4'-phosphopantetheine moiety from coenzyme A to a Ser of acyl-carrier-protein. The protein is Holo-[acyl-carrier-protein] synthase of Geobacter sulfurreducens (strain ATCC 51573 / DSM 12127 / PCA).